We begin with the raw amino-acid sequence, 176 residues long: Large ribosomal subunit protein uL10 (176 aa).

Belongs to the universal ribosomal protein uL10 family. As to quaternary structure, part of the ribosomal stalk of the 50S ribosomal subunit. The N-terminus interacts with L11 and the large rRNA to form the base of the stalk. The C-terminus forms an elongated spine to which L12 dimers bind in a sequential fashion forming a multimeric L10(L12)X complex.

Its function is as follows. Forms part of the ribosomal stalk, playing a central role in the interaction of the ribosome with GTP-bound translation factors. The protein is Large ribosomal subunit protein uL10 of Dehalococcoides mccartyi (strain ATCC BAA-2100 / JCM 16839 / KCTC 5957 / BAV1).